The primary structure comprises 267 residues: Glutamate racemase (267 aa).

Residues 10–11 (DS) and 42–43 (YG) contribute to the substrate site. Residue Cys73 is the Proton donor/acceptor of the active site. 74–75 (NT) contacts substrate. Cys183 serves as the catalytic Proton donor/acceptor. Substrate is bound at residue 184–185 (TH).

This sequence belongs to the aspartate/glutamate racemases family.

The enzyme catalyses L-glutamate = D-glutamate. The protein operates within cell wall biogenesis; peptidoglycan biosynthesis. Provides the (R)-glutamate required for cell wall biosynthesis. The chain is Glutamate racemase from Lactobacillus acidophilus (strain ATCC 700396 / NCK56 / N2 / NCFM).